Reading from the N-terminus, the 127-residue chain is Small ribosomal subunit protein uS13 (127 aa).

Residues 90-127 (RRHRQGLPVRGQRTRTNARTRRGRRVTVAGKKKAPSKK) are disordered. Basic residues predominate over residues 101–127 (QRTRTNARTRRGRRVTVAGKKKAPSKK).

Belongs to the universal ribosomal protein uS13 family. Part of the 30S ribosomal subunit. Forms a loose heterodimer with protein S19. Forms two bridges to the 50S subunit in the 70S ribosome.

Located at the top of the head of the 30S subunit, it contacts several helices of the 16S rRNA. In the 70S ribosome it contacts the 23S rRNA (bridge B1a) and protein L5 of the 50S subunit (bridge B1b), connecting the 2 subunits; these bridges are implicated in subunit movement. Contacts the tRNAs in the A and P-sites. The polypeptide is Small ribosomal subunit protein uS13 (Rippkaea orientalis (strain PCC 8801 / RF-1) (Cyanothece sp. (strain PCC 8801))).